We begin with the raw amino-acid sequence, 720 residues long: Inactive serine protease PAMR1 (720 aa).

The N-terminal stretch at M1–S21 is a signal peptide. 8 disulfide bridges follow: C128–C150, C177–C199, C239–C250, C244–C260, C262–C271, C280–C329, C315–C342, and C414–C442. Residues C128–I236 enclose the CUB domain. The 38-residue stretch at E235 to E272 folds into the EGF-like domain. Sushi domains are found at residues R278–K344 and A387–P444. Residues I445–K720 enclose the Peptidase S1 domain. The N-linked (GlcNAc...) asparagine glycan is linked to N451. A disulfide bridge links C489 with C505. An N-linked (GlcNAc...) asparagine glycan is attached at N614. Cystine bridges form between C630/C649 and C661/C697.

This sequence belongs to the peptidase S1 family.

It is found in the secreted. In terms of biological role, may play a role in regeneration of skeletal muscle. The polypeptide is Inactive serine protease PAMR1 (PAMR1) (Pongo abelii (Sumatran orangutan)).